Here is a 375-residue protein sequence, read N- to C-terminus: Trichodiene synthase (375 aa).

It belongs to the trichodiene synthase family.

It carries out the reaction (2E,6E)-farnesyl diphosphate = trichodiene + diphosphate. Its pathway is sesquiterpene biosynthesis; trichothecene biosynthesis. Its function is as follows. TS is a member of the terpene cyclase group of enzymes. It catalyzes the isomerization and cyclization of farnesyl pyro-phosphate to form trichodiene, the first cyclic intermediate in the biosynthetic pathway for trichothecenes. It serves to branch trichothecene biosynthesis from the isoprenoid pathway. The polypeptide is Trichodiene synthase (TRI5) (Fusarium pseudograminearum (Wheat and barley crown-rot fungus)).